The sequence spans 510 residues: Bifunctional purine biosynthesis protein PurH (510 aa).

Residues 1 to 143 (MTKRALISVS…KNHDAVLVLV (143 aa)) enclose the MGS-like domain.

It belongs to the PurH family.

The enzyme catalyses (6R)-10-formyltetrahydrofolate + 5-amino-1-(5-phospho-beta-D-ribosyl)imidazole-4-carboxamide = 5-formamido-1-(5-phospho-D-ribosyl)imidazole-4-carboxamide + (6S)-5,6,7,8-tetrahydrofolate. It catalyses the reaction IMP + H2O = 5-formamido-1-(5-phospho-D-ribosyl)imidazole-4-carboxamide. The protein operates within purine metabolism; IMP biosynthesis via de novo pathway; 5-formamido-1-(5-phospho-D-ribosyl)imidazole-4-carboxamide from 5-amino-1-(5-phospho-D-ribosyl)imidazole-4-carboxamide (10-formyl THF route): step 1/1. It functions in the pathway purine metabolism; IMP biosynthesis via de novo pathway; IMP from 5-formamido-1-(5-phospho-D-ribosyl)imidazole-4-carboxamide: step 1/1. This chain is Bifunctional purine biosynthesis protein PurH, found in Deinococcus radiodurans (strain ATCC 13939 / DSM 20539 / JCM 16871 / CCUG 27074 / LMG 4051 / NBRC 15346 / NCIMB 9279 / VKM B-1422 / R1).